The following is a 297-amino-acid chain: Tyrosine recombinase XerD (297 aa).

Positions 1–86 (MNDLIEDFLH…SLRSFFHYLM (86 aa)) constitute a Core-binding (CB) domain. Residues 107–291 (GLPKVLNLDD…TKLRLKDVYK (185 aa)) enclose the Tyr recombinase domain. Catalysis depends on residues arginine 147, lysine 171, histidine 243, arginine 246, and histidine 269. The active-site O-(3'-phospho-DNA)-tyrosine intermediate is the tyrosine 278.

It belongs to the 'phage' integrase family. XerD subfamily. As to quaternary structure, forms a cyclic heterotetrameric complex composed of two molecules of XerC and two molecules of XerD.

The protein localises to the cytoplasm. Its function is as follows. Site-specific tyrosine recombinase, which acts by catalyzing the cutting and rejoining of the recombining DNA molecules. The XerC-XerD complex is essential to convert dimers of the bacterial chromosome into monomers to permit their segregation at cell division. It also contributes to the segregational stability of plasmids. This is Tyrosine recombinase XerD from Listeria monocytogenes serovar 1/2a (strain ATCC BAA-679 / EGD-e).